Here is a 161-residue protein sequence, read N- to C-terminus: MDDIYKAAVEQLTEEQKNEFKAAFDIFVLGAEDGCISTKELGKVMRMLGQNPTPEELQEMIDEVDEDGSGTVDFDEFLVMMVRCMKDDSKGKSEEELSDLFRMFDKNADGYIDLDELKMMLQATGETITEDDIEELMKDGDKNNDGRIDYDEFLEFMKGVE.

Position 1 is an N-acetylmethionine (M1). EF-hand domains lie at 16 to 51, 52 to 87, 92 to 127, and 128 to 161; these read QKNE…LGQN, PTPE…CMKD, KSEE…TGET, and ITED…KGVE. Residues D65, D67, S69, T71, and E76 each contribute to the Ca(2+) site. S98 carries the phosphoserine modification. Residues D105, N107, D109, Y111, E116, D141, N143, D145, R147, and E152 each contribute to the Ca(2+) site.

This sequence belongs to the troponin C family.

Its function is as follows. Troponin is the central regulatory protein of striated muscle contraction. Tn consists of three components: Tn-I which is the inhibitor of actomyosin ATPase, Tn-T which contains the binding site for tropomyosin and Tn-C. The binding of calcium to Tn-C abolishes the inhibitory action of Tn on actin filaments. This is Troponin C, slow skeletal and cardiac muscles (Tnnc1) from Mus musculus (Mouse).